A 470-amino-acid polypeptide reads, in one-letter code: Neuraminidase (470 aa).

Residues 1 to 14 (MNPNQKIITIGSVS) are Intravirion-facing. An involved in apical transport and lipid raft association region spans residues 11–32 (GSVSLGLVVLNILLHIVSITIT). A helical transmembrane segment spans residues 15-35 (LGLVVLNILLHIVSITITVLV). The tract at residues 32 to 86 (TVLVLPGNGNNPSCNETVIREYNETVRIERVTQWHNTNVIEYLERPESDHFMNNT) is hypervariable stalk region. Topologically, residues 36 to 470 (LPGNGNNPSC…AILPFDIDKM (435 aa)) are virion surface. Asn-46, Asn-54, and Asn-84 each carry an N-linked (GlcNAc...) asparagine; by host glycan. The tract at residues 89–470 (LCDAKGFAPF…AILPFDIDKM (382 aa)) is head of neuraminidase. Cystine bridges form between Cys-90/Cys-417, Cys-122/Cys-127, Cys-182/Cys-229, Cys-231/Cys-236, Cys-277/Cys-290, Cys-279/Cys-288, Cys-316/Cys-335, and Cys-421/Cys-446. A substrate-binding site is contributed by Arg-116. N-linked (GlcNAc...) asparagine; by host glycosylation is present at Asn-144. Asp-149 functions as the Proton donor/acceptor in the catalytic mechanism. Residue Arg-150 participates in substrate binding. 275-276 (EE) contacts substrate. Substrate is bound at residue Arg-291. Asp-292 contacts Ca(2+). A glycan (N-linked (GlcNAc...) asparagine; by host) is linked at Asn-293. Ca(2+)-binding residues include Gly-296 and Asp-322. Arg-368 lines the substrate pocket. Asn-398 carries an N-linked (GlcNAc...) asparagine; by host glycan. Residue Tyr-402 is the Nucleophile of the active site.

It belongs to the glycosyl hydrolase 34 family. Homotetramer. It depends on Ca(2+) as a cofactor. In terms of processing, N-glycosylated.

It localises to the virion membrane. Its subcellular location is the host apical cell membrane. The enzyme catalyses Hydrolysis of alpha-(2-&gt;3)-, alpha-(2-&gt;6)-, alpha-(2-&gt;8)- glycosidic linkages of terminal sialic acid residues in oligosaccharides, glycoproteins, glycolipids, colominic acid and synthetic substrates.. Its activity is regulated as follows. Inhibited by the neuraminidase inhibitors zanamivir (Relenza) and oseltamivir (Tamiflu). These drugs interfere with the release of progeny virus from infected cells and are effective against all influenza strains. Resistance to neuraminidase inhibitors is quite rare. Its function is as follows. Catalyzes the removal of terminal sialic acid residues from viral and cellular glycoconjugates. Cleaves off the terminal sialic acids on the glycosylated HA during virus budding to facilitate virus release. Additionally helps virus spread through the circulation by further removing sialic acids from the cell surface. These cleavages prevent self-aggregation and ensure the efficient spread of the progeny virus from cell to cell. Otherwise, infection would be limited to one round of replication. Described as a receptor-destroying enzyme because it cleaves a terminal sialic acid from the cellular receptors. May facilitate viral invasion of the upper airways by cleaving the sialic acid moieties on the mucin of the airway epithelial cells. Likely to plays a role in the budding process through its association with lipid rafts during intracellular transport. May additionally display a raft-association independent effect on budding. Plays a role in the determination of host range restriction on replication and virulence. Sialidase activity in late endosome/lysosome traffic seems to enhance virus replication. The sequence is that of Neuraminidase from Aves.